The chain runs to 345 residues: Phosphoribosylformylglycinamidine cyclo-ligase (345 aa).

Belongs to the AIR synthase family.

It localises to the cytoplasm. The enzyme catalyses 2-formamido-N(1)-(5-O-phospho-beta-D-ribosyl)acetamidine + ATP = 5-amino-1-(5-phospho-beta-D-ribosyl)imidazole + ADP + phosphate + H(+). It functions in the pathway purine metabolism; IMP biosynthesis via de novo pathway; 5-amino-1-(5-phospho-D-ribosyl)imidazole from N(2)-formyl-N(1)-(5-phospho-D-ribosyl)glycinamide: step 2/2. In Staphylococcus carnosus (strain TM300), this protein is Phosphoribosylformylglycinamidine cyclo-ligase.